The primary structure comprises 142 residues: Large ribosomal subunit protein uL13 (142 aa).

It belongs to the universal ribosomal protein uL13 family. Part of the 50S ribosomal subunit.

In terms of biological role, this protein is one of the early assembly proteins of the 50S ribosomal subunit, although it is not seen to bind rRNA by itself. It is important during the early stages of 50S assembly. This Helicobacter hepaticus (strain ATCC 51449 / 3B1) protein is Large ribosomal subunit protein uL13.